The following is a 94-amino-acid chain: MGRSLKKGPYCSPKLLARIEEMNEKDQKRVVKTWSRRSTIFPQMIGHTIAVYDGRKHVPVYVTEEMVGHKLGEFAPTRTYRGHGHHTERSTALK.

It belongs to the universal ribosomal protein uS19 family.

Functionally, protein S19 forms a complex with S13 that binds strongly to the 16S ribosomal RNA. The sequence is that of Small ribosomal subunit protein uS19 from Desulforudis audaxviator (strain MP104C).